We begin with the raw amino-acid sequence, 470 residues long: Nuclear receptor ROR-beta (470 aa).

Positions 18–93 (VIPCKICGDK…LGMSRDAVKF (76 aa)) form a DNA-binding region, nuclear receptor. NR C4-type zinc fingers lie at residues 21–41 (CKICGDKSSGIHYGVITCEGC) and 57–81 (CPRQRNCLIDRTNRNRCQHCRLQKC). Basic and acidic residues predominate over residues 104–117 (LYAEVQKHQQRLQE). A disordered region spans residues 104 to 127 (LYAEVQKHQQRLQEQRQQQSGEAE). An NR LBD domain is found at 222 to 460 (EIDRIAQNII…TLFPPLYKEL (239 aa)). An AF-2 motif is present at residues 456-461 (LYKELF).

This sequence belongs to the nuclear hormone receptor family. NR1 subfamily. Monomer. Interacts with CRX. As to expression, isoform 2 expressed with circadian rhythm in eye and pineal gland. Isoform 1 expressed in retina cortex, thalamus, and hypothalamus.

The protein resides in the nucleus. The protein localises to the nucleoplasm. Its function is as follows. Nuclear receptor that binds DNA as a monomer to ROR response elements (RORE) containing a single core motif half-site 5'-AGGTCA-3' preceded by a short A-T-rich sequence. Considered to have intrinsic transcriptional activity, have some natural ligands such as all-trans retinoic acid (ATRA) and other retinoids which act as inverse agonists repressing the transcriptional activity. Required for normal postnatal development of rod and cone photoreceptor cells. Modulates rod photoreceptors differentiation at least by inducing the transcription factor NRL-mediated pathway. In cone photoreceptor cells, regulates transcription of OPN1SW. Involved in the regulation of the period length and stability of the circadian rhythm. May control cytoarchitectural patterning of neocortical neurons during development. May act in a dose-dependent manner to regulate barrel formation upon innervation of layer IV neurons by thalamocortical axons. May play a role in the suppression of osteoblastic differentiation through the inhibition of RUNX2 transcriptional activity. Functionally, critical for hindlimb motor control and for the differentiation of amacrine and horizontal cells in the retina. Regulates the expression of PTF1A synergistically with FOXN4. In Rattus norvegicus (Rat), this protein is Nuclear receptor ROR-beta (Rorb).